Consider the following 2136-residue polypeptide: Methylcytosine dioxygenase TET1 (2136 aa).

2 stretches are compositionally biased toward basic residues: residues 1–12 (MSRSRHARPSRL) and 20–31 (KKKKNSQLRKTT). Residues 1-47 (MSRSRHARPSRLVRKEDVNKKKKNSQLRKTTKGANKNVASVKTLSPG) form a disordered region. The span at 32–43 (KGANKNVASVKT) shows a compositional bias: polar residues. The sufficient for binding to genomic CpG islands stretch occupies residues 528–674 (LGIAQLSQAG…NGPKSESMDY (147 aa)). Residues 584-625 (EKKKRKRCGVCEPCQQKTNCGECTYCKNRKNSHQICKKRKCE) form a CXXC-type zinc finger. Positions 591, 594, 597, 603, 606, 609, 619, and 624 each coordinate Zn(2+). Basic and acidic residues-rich tracts occupy residues 712-724 (QNKK…HVKG), 732-743 (EAEKSKNSEVDK), and 849-869 (IHNE…EPKD). Disordered stretches follow at residues 712–746 (QNKK…KKRT), 849–876 (IHNE…VQPS), 899–923 (QLSE…EQRT), and 1119–1169 (EKGT…VSYQ). Position 871 is a phosphoserine (Ser871). A compositionally biased stretch (low complexity) spans 901–911 (SEAPSENSSPS). The span at 1119-1139 (EKGTIQQKPPSSVHNNHGSSL) shows a compositional bias: polar residues. A compositionally biased stretch (basic residues) spans 1146–1163 (TQKKTKSTPSRDRRKKKP). The Zn(2+) site is built by Cys1422, Cys1424, Cys1482, His1508, and Cys1510. A 2-oxoglutarate-binding site is contributed by Arg1551. 4 residues coordinate Zn(2+): Cys1561, Cys1563, Cys1579, and Cys1588. The tract at residues 1580–1593 (SWSMYFNGCKFGRS) is interaction with DNA. A Glycyl lysine isopeptide (Lys-Gly) (interchain with G-Cter in ubiquitin) cross-link involves residue Lys1589. Residue Cys1648 participates in Zn(2+) binding. Cys1664 contacts 2-oxoglutarate. His1670 is a Zn(2+) binding site. His1672 and Asp1674 together coordinate Fe cation. Asn1677 contributes to the substrate binding site. A 2-oxoglutarate-binding site is contributed by His1706. Disordered regions lie at residues 1774–1897 (EKKP…AAAD) and 1919–1984 (EPLI…SPAE). Low complexity predominate over residues 1786-1800 (NSTTTNNSKPSSLPT). 2 stretches are compositionally biased toward polar residues: residues 1824 to 1833 (SSDNTKTYSL) and 1937 to 1953 (HQPN…QDLA). The segment covering 1957–1976 (MEEDEQHSEADEPPSDEPLS) has biased composition (acidic residues). His2028 contacts Fe cation. 2043-2045 (RLS) is a 2-oxoglutarate binding site. 2049–2051 (YQH) lines the substrate pocket. Residue His2059 coordinates Zn(2+). A compositionally biased stretch (basic and acidic residues) spans 2074 to 2087 (KNKKMKASEQKDQA). A disordered region spans residues 2074–2100 (KNKKMKASEQKDQAANEGPEQSSEVNE).

The protein belongs to the TET family. In terms of assembly, interacts with SIN3A; recruits the transcriptional corepressor SIN3A to gene promoters. Interacts with HCFC1. Interacts (via C-terminus) with OGT. Found in a complex composed of at least SINHCAF, SIN3A, HDAC1, SAP30, RBBP4, OGT and TET1. Interacts with QSER1. Interacts with NONO (via DNA-binding domain); this interaction recruits TET1 to genomic loci. Interacts with FOXA2; this interaction may recruit TET1 to specific enhancers to preserve their unmethylated status and hence allowing gene expression. Interacts with RNF2. Directly interacts (via C-terminus) with the DCAF1 component of the CRL4(VprBP) E3 ubiquitin-protein ligase complex. As to quaternary structure, interacts with UHRF1; this interaction induces the recruitment of TET1 to replicating heterochromatin. Interacts with DCAF1. It depends on Fe(2+) as a cofactor. Zn(2+) serves as cofactor. Glycosylated. Interaction with OGT leads to GlcNAcylation. In terms of processing, monoubiquitinated at Lys-1589 by the DCX (DDB1-CUL4-X-box) E3 ubiquitin-protein ligase complex called CRL4(VprBP) or CUL4A-RBX1-DDB1-DCAF1/VPRBP complex; this modification promotes binding to DNA. In terms of tissue distribution, expressed in fetal heart, lung and brain, and in adult skeletal muscle, thymus and ovary. Not detected in adult heart, lung or brain. Up-regulated in glioblastoma cells (at protein level). Expressed in embryonic stem cells (at protein level).

The protein resides in the nucleus. Its subcellular location is the chromosome. It carries out the reaction a 5-methyl-2'-deoxycytidine in DNA + 2-oxoglutarate + O2 = a 5-hydroxymethyl-2'-deoxycytidine in DNA + succinate + CO2. The catalysed reaction is a 5-hydroxymethyl-2'-deoxycytidine in DNA + 2-oxoglutarate + O2 = a 5-formyl-2'-deoxycytidine in DNA + succinate + CO2 + H2O. It catalyses the reaction a 5-formyl-2'-deoxycytidine in DNA + 2-oxoglutarate + O2 = a 5-carboxyl-2'-deoxycytidine in DNA + succinate + CO2 + H(+). Dioxygenase that plays a key role in active DNA demethylation, by catalyzing the sequential oxidation of the modified genomic base 5-methylcytosine (5mC) into 5-hydroxymethylcytosine (5hmC), 5-formylcytosine (5fC), and 5-carboxylcytosine (5caC). In addition to its role in DNA demethylation, plays a more general role in chromatin regulation by recruiting histone modifying protein complexes to alter histone marks and chromatin accessibility, leading to both activation and repression of gene expression. Plays therefore a role in many biological processes, including stem cell maintenance, T- and B-cell development, inflammation regulation, genomic imprinting, neural activity or DNA repair. Involved in the balance between pluripotency and lineage commitment of cells and plays a role in embryonic stem cells maintenance and inner cell mass cell specification. Together with QSER1, plays an essential role in the protection and maintenance of transcriptional and developmental programs to inhibit the binding of DNMT3A/3B and therefore de novo methylation. May play a role in pancreatic beta-cell specification during development. In this context, may function as an upstream epigenetic regulator of PAX4 presumably through direct recruitment by FOXA2 to a PAX4 enhancer to preserve its unmethylated status, thereby potentiating PAX4 expression to adopt beta-cell fate during endocrine lineage commitment. Under DNA hypomethylation conditions, such as in female meiotic germ cells, may induce epigenetic reprogramming of pericentromeric heterochromatin (PCH), the constitutive heterochromatin of pericentromeric regions. PCH forms chromocenters in the interphase nucleus and chromocenters cluster at the prophase of meiosis. In this context, may also be essential for chromocenter clustering in a catalytic activity-independent manner, possibly through the recruitment polycomb repressive complex 1 (PRC1) to the chromocenters. During embryonic development, may be required for normal meiotic progression in oocytes and meiotic gene activation. Binds preferentially to DNA containing cytidine-phosphate-guanosine (CpG) dinucleotides over CpH (H=A, T, and C), hemimethylated-CpG and hemimethylated-hydroxymethyl-CpG. Its function is as follows. Dioxygenase that plays a key role in active DNA demethylation. Binds to promoters, particularly to those with high CG content. In hippocampal neurons, isoform 1 regulates the expression of a unique subset of genes compared to isoform 2, although some overlap exists between both isoforms, hence differentially regulates excitatory synaptic transmission. In hippocampal neuron cell cultures, isoform 1 controls both miniature excitatory postsynaptic current amplitude and frequency. Isoform 1 may regulate genes involved in hippocampal-dependent memory, leading to positive regulation of memory, contrary to isoform 2 that may decrease memory. In terms of biological role, dioxygenase that plays a key role in active DNA demethylation. As isoform 1, binds to promoters, particularly to those with high CG content, however displays reduced global chromatin affinity compared with isoform 1, leading to decreased global DNA demethylation compared with isoform 1. Contrary to isoform 1, isoform 2 localizes during S phase to sites of ongoing DNA replication in heterochromatin, causing a significant de novo 5hmC formation, globally, and more so in heterochromatin, including LINE 1 interspersed DNA repeats leading to their activation. In hippocampal neurons, isoform 2 regulates the expression of a unique subset of genes compared to isoform 1, although some overlap between both isoforms, hence differentially regulates excitatory synaptic transmission. In hippocampal neuron cell cultures, isoform 2 controls miniature excitatory postsynaptic current frequency, but not amplitude. Isoform 2 may regulate genes involved in hippocampal-dependent memory, leading to negative regulation of memory, contrary to isoform 1 that may improve memory. In immature and partially differentiated gonadotrope cells, directly represses luteinizing hormone gene LHB expression and does not catalyze 5hmC at the gene promoter. The polypeptide is Methylcytosine dioxygenase TET1 (Homo sapiens (Human)).